A 92-amino-acid chain; its full sequence is YcgL domain-containing protein Sputcn32_1766 (92 aa).

The 85-residue stretch at Met1 to Lys85 folds into the YcgL domain.

The polypeptide is YcgL domain-containing protein Sputcn32_1766 (Shewanella putrefaciens (strain CN-32 / ATCC BAA-453)).